A 262-amino-acid polypeptide reads, in one-letter code: Mlc titration factor A (262 aa).

Residues H111, H148, H152, and E211 each contribute to the Zn(2+) site.

It belongs to the MtfA family. As to quaternary structure, interacts with Mlc. The cofactor is Zn(2+).

Its subcellular location is the cytoplasm. In terms of biological role, involved in the modulation of the activity of the glucose-phosphotransferase system (glucose-PTS). Interacts with the transcriptional repressor Mlc, preventing its interaction with DNA and leading to the modulation of expression of genes regulated by Mlc, including ptsG, which encodes the PTS system glucose-specific EIICB component. Its function is as follows. Shows zinc-dependent metallopeptidase activity. The polypeptide is Mlc titration factor A (Serratia proteamaculans (strain 568)).